The primary structure comprises 298 residues: PYK10-binding protein 1 (298 aa).

At A2 the chain carries N-acetylalanine. Jacalin-type lectin domains follow at residues 2 to 142 (AQKV…YFAP) and 152 to 295 (AKQL…HVRP). Position 20 is a phosphoserine (S20).

Belongs to the jacalin lectin family. In terms of assembly, component of the PYK10 complex, at least composed of PYK10/BGLU23, BGLU21, BGLU22, JAL22, JAL23, PBP1/JAL30, PBP2/JAL31, JAL32, JAL33, JAL34, JAL35, GLL22 and GLL23. Expressed exclusively in roots.

Its subcellular location is the cytoplasm. Inhibitor-type lectin that may regulate the correct polymerization of BGLU23/PYK10 upon tissue damage. Activates BGLU21, BGLU22 and BGLU23. The protein is PYK10-binding protein 1 (PBP1) of Arabidopsis thaliana (Mouse-ear cress).